The primary structure comprises 668 residues: Fructose-1,6-bisphosphatase class 3 (668 aa).

This sequence belongs to the FBPase class 3 family. Mn(2+) serves as cofactor.

The enzyme catalyses beta-D-fructose 1,6-bisphosphate + H2O = beta-D-fructose 6-phosphate + phosphate. It functions in the pathway carbohydrate biosynthesis; gluconeogenesis. This Clostridium botulinum (strain Kyoto / Type A2) protein is Fructose-1,6-bisphosphatase class 3.